Consider the following 373-residue polypeptide: Flagellar biosynthesis protein FlhF (373 aa).

Residues 179–186, 255–259, and 312–315 each bind GTP; these read GPTGVGKT, DTAGR, and TKLD.

It belongs to the GTP-binding SRP family.

The protein localises to the cell membrane. In terms of biological role, necessary for flagellar biosynthesis. May be involved in translocation of the flagellum. This is Flagellar biosynthesis protein FlhF (flhF) from Aquifex aeolicus (strain VF5).